The primary structure comprises 30 residues: Uperin-6.1 (30 aa).

Expressed by the skin dorsal glands.

Its subcellular location is the secreted. The protein is Uperin-6.1 of Uperoleia inundata (Floodplain toadlet).